Here is a 254-residue protein sequence, read N- to C-terminus: Isoprenyl transferase (254 aa).

Residue aspartate 12 is part of the active site. Aspartate 12 serves as a coordination point for Mg(2+). Substrate is bound by residues 13 to 16, tryptophan 17, arginine 25, histidine 29, and 57 to 59; these read GNGR and SSE. Asparagine 60 (proton acceptor) is an active-site residue. Substrate contacts are provided by residues tryptophan 61, arginine 63, arginine 180, and 186-188; that span reads RLS. Glutamate 199 is a binding site for Mg(2+).

This sequence belongs to the UPP synthase family. Homodimer. Mg(2+) serves as cofactor.

Its function is as follows. Catalyzes the condensation of isopentenyl diphosphate (IPP) with allylic pyrophosphates generating different type of terpenoids. The polypeptide is Isoprenyl transferase (Brucella abortus biovar 1 (strain 9-941)).